The sequence spans 448 residues: MAEQHTGVGRQRGARPWPRPRRVATLSVHTSPLHQPGTGDAGGMNVYILEVARRLAEADVEVEIFTRATSADVPPVVEMMPGVHVRNIISGPLGGLTKEELPGQLCAFTAGVLRAEASRAAGHYDLIHSHYWLSGQVGWLAKERWGVPLVHTAHTLAKVKNAQLAAGDRPEPKARVIGEEQVVAEADRLVANTKTEAGDLIDRYDADPTRVEVVEPGVDLARFTPAAGDRSRAQALARRRLGLPERGYVVAFVGRVQPLKAPDVLIRAAAALRQRDPALAEELTVVVCGGPSGSGLDRPTHLIELAASLGVTDSVRFLPPQTGDDLPALYRAADLVAVPSYNESFGLVALEAQACGTPVVAAAVGGLVTAVRDQVSGVLVDGHDPAVWARTLSRLLPDTGLRATLAQGARRHACNFSWDRTVSGLLEVYGEAVAAYGPQSSELATCSC.

A disordered region spans residues 1-21; the sequence is MAEQHTGVGRQRGARPWPRPR. Histidine 29 contacts 1D-myo-inositol 3-phosphate. Residues 35–36 and glycine 43 each bind UDP-N-acetyl-alpha-D-glucosamine; that span reads QP. Residues 40-45, lysine 98, tyrosine 131, threonine 155, and arginine 175 each bind 1D-myo-inositol 3-phosphate; that span reads DAGGMN. 3 residues coordinate UDP-N-acetyl-alpha-D-glucosamine: arginine 255, lysine 260, and glutamine 321. Mg(2+)-binding residues include tyrosine 330, arginine 331, and alanine 333. Glutamate 343 and glutamate 351 together coordinate UDP-N-acetyl-alpha-D-glucosamine. Threonine 357 is a Mg(2+) binding site.

Belongs to the glycosyltransferase group 1 family. MshA subfamily. In terms of assembly, homodimer.

The enzyme catalyses 1D-myo-inositol 3-phosphate + UDP-N-acetyl-alpha-D-glucosamine = 1D-myo-inositol 2-acetamido-2-deoxy-alpha-D-glucopyranoside 3-phosphate + UDP + H(+). Its function is as follows. Catalyzes the transfer of a N-acetyl-glucosamine moiety to 1D-myo-inositol 3-phosphate to produce 1D-myo-inositol 2-acetamido-2-deoxy-glucopyranoside 3-phosphate in the mycothiol biosynthesis pathway. This Salinispora arenicola (strain CNS-205) protein is D-inositol 3-phosphate glycosyltransferase.